The following is a 523-amino-acid chain: UvrABC system protein C (523 aa).

Positions 15-93 (HLPGCYLFKD…IKKHWPRYNI (79 aa)) constitute a GIY-YIG domain. The UVR domain occupies 197 to 232 (RELIESMETEMKEMAAKQMFEQAMELRDEIAALEYL).

The protein belongs to the UvrC family. As to quaternary structure, interacts with UvrB in an incision complex.

The protein resides in the cytoplasm. Its function is as follows. The UvrABC repair system catalyzes the recognition and processing of DNA lesions. UvrC both incises the 5' and 3' sides of the lesion. The N-terminal half is responsible for the 3' incision and the C-terminal half is responsible for the 5' incision. This is UvrABC system protein C from Methanosarcina mazei (strain ATCC BAA-159 / DSM 3647 / Goe1 / Go1 / JCM 11833 / OCM 88) (Methanosarcina frisia).